A 108-amino-acid polypeptide reads, in one-letter code: UPF0060 membrane protein Mvan_3406 (108 aa).

4 helical membrane passes run 7–27, 32–52, 61–81, and 87–107; these read LLFVLAAILEIGGAWLVWQGV, GLTWVGAGVIALGAYGFVAAF, VLAAYGGVFVAGSLLWGVVAD, and RWDITGAAVCLAGVGLIMYAP.

Belongs to the UPF0060 family.

It is found in the cell membrane. In Mycolicibacterium vanbaalenii (strain DSM 7251 / JCM 13017 / BCRC 16820 / KCTC 9966 / NRRL B-24157 / PYR-1) (Mycobacterium vanbaalenii), this protein is UPF0060 membrane protein Mvan_3406.